We begin with the raw amino-acid sequence, 152 residues long: Protein Turandot X (152 aa).

Residues Met-1–Ala-22 form the signal peptide.

This sequence belongs to the Turandot family.

It localises to the secreted. In terms of biological role, a humoral factor that may play a role in stress tolerance. The chain is Protein Turandot X from Drosophila erecta (Fruit fly).